The following is a 188-amino-acid chain: Holliday junction branch migration complex subunit RuvA (188 aa).

The interval 1–62 (MIVGVRGVLV…EDAQLLYGFL (62 aa)) is domain I. The domain II stretch occupies residues 63 to 135 (ELGEKKLFER…LSGFDTELII (73 aa)). The segment at 135 to 139 (ISASE) is flexible linker. The segment at 140-188 (PKSLAVAQASEALESLGFKKDKISKALGSCSAVDTAILVKEALKLLQTI) is domain III.

The protein belongs to the RuvA family. Homotetramer. Forms an RuvA(8)-RuvB(12)-Holliday junction (HJ) complex. HJ DNA is sandwiched between 2 RuvA tetramers; dsDNA enters through RuvA and exits via RuvB. An RuvB hexamer assembles on each DNA strand where it exits the tetramer. Each RuvB hexamer is contacted by two RuvA subunits (via domain III) on 2 adjacent RuvB subunits; this complex drives branch migration. In the full resolvosome a probable DNA-RuvA(4)-RuvB(12)-RuvC(2) complex forms which resolves the HJ.

The protein localises to the cytoplasm. In terms of biological role, the RuvA-RuvB-RuvC complex processes Holliday junction (HJ) DNA during genetic recombination and DNA repair, while the RuvA-RuvB complex plays an important role in the rescue of blocked DNA replication forks via replication fork reversal (RFR). RuvA specifically binds to HJ cruciform DNA, conferring on it an open structure. The RuvB hexamer acts as an ATP-dependent pump, pulling dsDNA into and through the RuvAB complex. HJ branch migration allows RuvC to scan DNA until it finds its consensus sequence, where it cleaves and resolves the cruciform DNA. This is Holliday junction branch migration complex subunit RuvA from Sulfurimonas denitrificans (strain ATCC 33889 / DSM 1251) (Thiomicrospira denitrificans (strain ATCC 33889 / DSM 1251)).